Consider the following 370-residue polypeptide: 3-isopropylmalate dehydrogenase (370 aa).

Residue 77-90 (GPKWDGVPYEHRPE) participates in NAD(+) binding. Positions 97, 107, 135, and 226 each coordinate substrate. Positions 226, 250, and 254 each coordinate Mg(2+). 290 to 302 (GSAPDIAGKSIAN) is a binding site for NAD(+).

This sequence belongs to the isocitrate and isopropylmalate dehydrogenases family. LeuB type 1 subfamily. As to quaternary structure, homodimer. The cofactor is Mg(2+). Mn(2+) serves as cofactor.

Its subcellular location is the cytoplasm. The enzyme catalyses (2R,3S)-3-isopropylmalate + NAD(+) = 4-methyl-2-oxopentanoate + CO2 + NADH. It functions in the pathway amino-acid biosynthesis; L-leucine biosynthesis; L-leucine from 3-methyl-2-oxobutanoate: step 3/4. Catalyzes the oxidation of 3-carboxy-2-hydroxy-4-methylpentanoate (3-isopropylmalate) to 3-carboxy-4-methyl-2-oxopentanoate. The product decarboxylates to 4-methyl-2 oxopentanoate. This chain is 3-isopropylmalate dehydrogenase (leuB), found in Agrobacterium fabrum (strain C58 / ATCC 33970) (Agrobacterium tumefaciens (strain C58)).